The chain runs to 125 residues: Protein ApaG (125 aa).

An ApaG domain is found at 1 to 125 (MIEQPRICVQ…FRLAIPALIH (125 aa)).

In Yersinia pseudotuberculosis serotype IB (strain PB1/+), this protein is Protein ApaG.